The sequence spans 829 residues: Colorectal mutant cancer protein (829 aa).

3 disordered regions span residues 114-139, 282-320, and 672-700; these read RSEL…TSVS, TRLQ…SSND, and EEQK…CADA. Positions 123–132 are enriched in basic and acidic residues; that stretch reads EVNEDSRSMD. Residues 285-312 show a composition bias toward polar residues; it reads QSVQATGPSSPGRLTSTNRPINPSTGEL. Over residues 689 to 698 the composition is skewed to basic and acidic residues; that stretch reads SKDKPGKECA. A Nuclear localization signal motif is present at residues 766 to 782; the sequence is KRANSNLVAAYEKAKKK. The short motif at 826 to 829 is the PDZ-binding element; that stretch reads ETSL. Ser828 is subject to Phosphoserine.

It belongs to the MCC family. In terms of assembly, interacts with SCRIB (via phosphorylated PDZ-binding motif), EZR, SNX27, NHERF1 and NHERF2. Interacts with CTNNB1; the interaction is enhanced upon Wnt stimulation. Interacts with MYH10. Interacts with CCAR2. In terms of tissue distribution, expressed in a variety of tissues.

It is found in the cell membrane. The protein localises to the cell projection. It localises to the lamellipodium. Its subcellular location is the nucleus. The protein resides in the cytoplasm. Functionally, candidate for the putative colorectal tumor suppressor gene located at 5q21. Suppresses cell proliferation and the Wnt/b-catenin pathway in colorectal cancer cells. Inhibits DNA binding of b-catenin/TCF/LEF transcription factors. Involved in cell migration independently of RAC1, CDC42 and p21-activated kinase (PAK) activation. Represses the beta-catenin pathway (canonical Wnt signaling pathway) in a CCAR2-dependent manner by sequestering CCAR2 to the cytoplasm, thereby impairing its ability to inhibit SIRT1 which is involved in the deacetylation and negative regulation of beta-catenin (CTNB1) transcriptional activity. The protein is Colorectal mutant cancer protein (MCC) of Homo sapiens (Human).